The following is a 460-amino-acid chain: Ufm1-specific protease 2 (460 aa).

Residues C293, D417, and H419 contribute to the active site.

The protein belongs to the peptidase C78 family.

The protein resides in the endoplasmic reticulum. Its subcellular location is the cytoplasm. It is found in the nucleus. Thiol-dependent isopeptidase that specifically cleaves UFM1, a ubiquitin-like modifier protein, from conjugated proteins. While it is also able to mediate the processing of UFM1 precursors, a prerequisite for conjugation reactions, UFSP2 mainly acts as a protein deUFMylase that mediates deconjugation of UFM1 from target proteins. This is Ufm1-specific protease 2 from Gallus gallus (Chicken).